Reading from the N-terminus, the 518-residue chain is Cytochrome P450 monooxygenase pyr3 (518 aa).

The helical transmembrane segment at 26 to 46 threads the bilayer; it reads GVAIVLFLAPLALHLVSSYLF. Heme is bound at residue cysteine 458.

The protein belongs to the cytochrome P450 family. The cofactor is heme.

It is found in the membrane. The protein operates within secondary metabolite biosynthesis; terpenoid biosynthesis. Functionally, cytochrome P450 monooxygenase; part of the gene cluster that mediates the biosynthesis of pyripyropene A, a specific human acyl-coenzyme A:cholesterol acyltransferase 2 inhibitor. The first step of the pathway is the synthesis of nicotinyl-CoA from nicotinic acid by the nicotinic acid-CoA ligase pyr1. Nicotinyl-CoA is then a substrate of polyketide synthase pyr2 to produce 4-hydroxy-6-(3-pyridinyl)-2H-pyran-2-one (HPPO) which is further prenylated by the polyprenyl transferase pyr6 to yield farnesyl-HPPO. The next steps consist of an epoxidation of farnesyl-HPPO to epoxyfarnesyl-HPPO by FAD-dependent monooxygenase pyr5 and a cyclization of the terpenoid portion by the terpene cyclase pyr4 to yield deacetyl-pyripyropene E. The 2 cytochrome P450 monooxygenases pyr3 and pyr9, and the 2 acetyltransferases pyr7 and pyr8 are involved in the conversion of deacetyl-pyripyropene E into pyripyropene A through several cycles of oxidation and acetylation steps. Pyr7 acetylates deacetyl-pyripyropene E to pyripyropene E which is oxidized to 11-deacetyl-pyripyropene O by pyr3, which is in turn acetylated into pyripyropene O by pyr8. Pyripyropene O is then oxidized to deacetyl-pyripyropene A by pyr9. Deacetyl-pyripyropene A is finally acetylated to pyripyropene A by pyr8. The protein is Cytochrome P450 monooxygenase pyr3 of Aspergillus fumigatus (strain ATCC MYA-4609 / CBS 101355 / FGSC A1100 / Af293) (Neosartorya fumigata).